The sequence spans 474 residues: MSKKLHIKTWGCQMNEYDSSKMADLLGEYQGYTLTEEAEEADILLLNTCSIREKAQEKVFHQLGRWKTLKDKNPDLIIGVGGCVASQEGKAIKDRAQCVDIIFGPQTLHRLPEMIEQVRRGEKAVIDVSFPEIEKFDRLPEPRAEGPTAFVSIMEGCSKYCSFCVVPYTRGEEVSRPSDDIILEIAQLAEQGVREVNLLGQNVNAYRGATHDGGICTFAELLRYVAAIDGIDRIRFTTSHPIEFTQDIIDVYEDTPELVSFLHLPVQSGSDRILTAMKRGHMAIEYKSIIRRLRKARPDIQISSDFIIGFPGETQEDFADTMKLIEDVAFDHSFSFIYSARPGTPAADLPDDVDMEEKKQRLAILQDRITQQAMRYSRHMMGTVQRILVEGPSVKNPMELRGRTENNRVVNFEGLPKHIGTFVDVEIVDVYTNSLRGKFIRGEDEMDLRRNLRPSDILAKHKQDDDLGVTQFKP.

In terms of domain architecture, MTTase N-terminal spans 3-120 (KKLHIKTWGC…LPEMIEQVRR (118 aa)). [4Fe-4S] cluster-binding residues include Cys-12, Cys-49, Cys-83, Cys-157, Cys-161, and Cys-164. Residues 143–375 (RAEGPTAFVS…QDRITQQAMR (233 aa)) enclose the Radical SAM core domain. Residues 378–441 (RHMMGTVQRI…TNSLRGKFIR (64 aa)) enclose the TRAM domain.

Belongs to the methylthiotransferase family. MiaB subfamily. As to quaternary structure, monomer. [4Fe-4S] cluster is required as a cofactor.

Its subcellular location is the cytoplasm. It carries out the reaction N(6)-dimethylallyladenosine(37) in tRNA + (sulfur carrier)-SH + AH2 + 2 S-adenosyl-L-methionine = 2-methylsulfanyl-N(6)-dimethylallyladenosine(37) in tRNA + (sulfur carrier)-H + 5'-deoxyadenosine + L-methionine + A + S-adenosyl-L-homocysteine + 2 H(+). Its function is as follows. Catalyzes the methylthiolation of N6-(dimethylallyl)adenosine (i(6)A), leading to the formation of 2-methylthio-N6-(dimethylallyl)adenosine (ms(2)i(6)A) at position 37 in tRNAs that read codons beginning with uridine. In Shewanella oneidensis (strain ATCC 700550 / JCM 31522 / CIP 106686 / LMG 19005 / NCIMB 14063 / MR-1), this protein is tRNA-2-methylthio-N(6)-dimethylallyladenosine synthase.